Reading from the N-terminus, the 802-residue chain is Neuronal PAS domain-containing protein 4 (802 aa).

The basic motif; degenerate stretch occupies residues M1–R13. The bHLH domain occupies M1 to G53. A coiled-coil region spans residues T5–S38. The interval D14 to G53 is helix-loop-helix motif. 2 consecutive PAS domains span residues S70–D144 and P203–S273. A PAC domain is found at A278 to M317. Polar residues-rich tracts occupy residues F466–T476, S506–T518, and T532–P555. Disordered regions lie at residues F466–L485 and S506–P555. Residues Y624–R648 adopt a coiled-coil conformation. The segment at L717–E749 is disordered.

As to quaternary structure, efficient DNA binding requires dimerization with another bHLH protein. Heterodimer; forms a heterodimer with ARNT, ARNT2 or BMAL1. In terms of processing, ubiquitinated, leading to degradation by the proteosome. In terms of tissue distribution, brain.

The protein resides in the nucleus. Transcription factor expressed in neurons of the brain that regulates the excitatory-inhibitory balance within neural circuits and is required for contextual memory in the hippocampus. Plays a key role in the structural and functional plasticity of neurons. Acts as an early-response transcription factor in both excitatory and inhibitory neurons, where it induces distinct but overlapping sets of late-response genes in these two types of neurons, allowing the synapses that form on inhibitory and excitatory neurons to be modified by neuronal activity in a manner specific to their function within a circuit, thereby facilitating appropriate circuit responses to sensory experience. In excitatory neurons, activates transcription of BDNF, which in turn controls the number of GABA-releasing synapses that form on excitatory neurons, thereby promoting an increased number of inhibitory synapses on excitatory neurons. In inhibitory neurons, regulates a distinct set of target genes that serve to increase excitatory input onto somatostatin neurons, probably resulting in enhanced feedback inhibition within cortical circuits. The excitatory and inhibitory balance in neurons affects a number of processes, such as short-term and long-term memory, acquisition of experience, fear memory, response to stress and social behavior. Acts as a regulator of dendritic spine development in olfactory bulb granule cells in a sensory-experience-dependent manner by regulating expression of MDM2. Efficient DNA binding requires dimerization with another bHLH protein, such as ARNT, ARNT2 or BMAL1. Can activate the CME (CNS midline enhancer) element. This is Neuronal PAS domain-containing protein 4 from Homo sapiens (Human).